The following is a 466-amino-acid chain: Amidase (466 aa).

Residues lysine 79 and serine 148 each act as charge relay system in the active site. The segment at 128–152 is disordered; sequence YGRITPKSRNPRDPGRTPGGSSGGS. Catalysis depends on serine 172, which acts as the Acyl-ester intermediate.

This sequence belongs to the amidase family.

It carries out the reaction a monocarboxylic acid amide + H2O = a monocarboxylate + NH4(+). This is Amidase from Pseudomonas putida (Arthrobacter siderocapsulatus).